Reading from the N-terminus, the 537-residue chain is Putative cysteine ligase BshC (537 aa).

A coiled-coil region spans residues 383–451 (MERTQKLLKQ…EVKENQDNFN (69 aa)).

The protein belongs to the BshC family.

Functionally, involved in bacillithiol (BSH) biosynthesis. May catalyze the last step of the pathway, the addition of cysteine to glucosamine malate (GlcN-Mal) to generate BSH. The sequence is that of Putative cysteine ligase BshC from Staphylococcus haemolyticus (strain JCSC1435).